The sequence spans 205 residues: uncharacterized protein (205 aa).

Residues 5 to 27 (IIVLFIIHFIMINENVFIALLHY) traverse the membrane as a helical segment.

The protein to T.maritima TM1570.

It is found in the membrane. This is an uncharacterized protein from Aquifex aeolicus (strain VF5).